Consider the following 323-residue polypeptide: Putative HTH-type transcriptional regulatory protein Mbur_1811 (323 aa).

The 59-residue stretch at 132 to 190 folds into the HTH cro/C1-type domain; the sequence is LKEARMNVSMSLGALASELGVSRRTISKYEEGQMDASIDIVLHLEEILDMALAKSIDIL. Positions 143-162 form a DNA-binding region, H-T-H motif; it reads LGALASELGVSRRTISKYEE.

In Methanococcoides burtonii (strain DSM 6242 / NBRC 107633 / OCM 468 / ACE-M), this protein is Putative HTH-type transcriptional regulatory protein Mbur_1811.